We begin with the raw amino-acid sequence, 209 residues long: MTLSQQLSTLISKTQLVVSQEQIDLLIQYVELLNKWNKAYNLTSVRDPSEMLVKHIMDSLMVGEVLIGKNFIDVGTGPGLPGIPLAILYPERNFVLLDSLGKRITFLRQVVFQLKLSNVTPVKARVEEYQGEEPFDGVLSRAFSSLNDMVSWCKHLITTEQGRFFALKGQYPQDEISQLPENITLVDSHEIIVPDLVGERHVIVLKKLH.

Residues glycine 75, leucine 80, 126-127 (VE), and arginine 141 contribute to the S-adenosyl-L-methionine site.

Belongs to the methyltransferase superfamily. RNA methyltransferase RsmG family.

The protein resides in the cytoplasm. The catalysed reaction is guanosine(527) in 16S rRNA + S-adenosyl-L-methionine = N(7)-methylguanosine(527) in 16S rRNA + S-adenosyl-L-homocysteine. Specifically methylates the N7 position of guanine in position 527 of 16S rRNA. This Colwellia psychrerythraea (strain 34H / ATCC BAA-681) (Vibrio psychroerythus) protein is Ribosomal RNA small subunit methyltransferase G.